The chain runs to 594 residues: Sodium-dependent glucose transporter 1 (594 aa).

Helical transmembrane passes span 77 to 97 (WLVSLALCASFLGLGMAISVL), 115 to 137 (LSYIFVGRASGYIGGSLLGGILF), 144 to 161 (LLLGFALLTTAFGMSGTP), 166 to 186 (AWVLTVLMSSVGVSMGVLDTG), 205 to 225 (ALHFSFAAGAFASPIIAKLLF), 269 to 289 (IVIGAFVLLVSLLFFSLYFCI), 311 to 331 (TLIILLSMFFFFYVGSEVAYG), 349 to 371 (AAGLNSLFWGAFAAGRGLAIFFA), 393 to 413 (LLCLFSQNYPMLWACTALYGI), 439 to 459 (IFVVGAALGEMVLPALLGFLL), and 467 to 487 (LLMYLTLCTATFTSILFPVLY).

Belongs to the major facilitator superfamily.

It is found in the apical cell membrane. May function as a sodium-dependent glucose transporter. Potential channels for urea in the inner medulla of kidney. The polypeptide is Sodium-dependent glucose transporter 1 (mfsd4b) (Danio rerio (Zebrafish)).